A 230-amino-acid chain; its full sequence is Sugar fermentation stimulation protein homolog (230 aa).

Belongs to the SfsA family.

The polypeptide is Sugar fermentation stimulation protein homolog (Clostridium acetobutylicum (strain ATCC 824 / DSM 792 / JCM 1419 / IAM 19013 / LMG 5710 / NBRC 13948 / NRRL B-527 / VKM B-1787 / 2291 / W)).